Consider the following 312-residue polypeptide: Small ribosomal subunit biogenesis GTPase RsgA (312 aa).

The 160-residue stretch at 86–245 (QSFLKRPAVA…LADTPGFNRP (160 aa)) folds into the CP-type G domain. GTP contacts are provided by residues 135–138 (TKID) and 187–195 (GPSGVGKTS). 4 residues coordinate Zn(2+): C270, C275, H277, and C283.

Belongs to the TRAFAC class YlqF/YawG GTPase family. RsgA subfamily. In terms of assembly, monomer. Associates with 30S ribosomal subunit, binds 16S rRNA. Requires Zn(2+) as cofactor.

The protein localises to the cytoplasm. Functionally, one of several proteins that assist in the late maturation steps of the functional core of the 30S ribosomal subunit. Helps release RbfA from mature subunits. May play a role in the assembly of ribosomal proteins into the subunit. Circularly permuted GTPase that catalyzes slow GTP hydrolysis, GTPase activity is stimulated by the 30S ribosomal subunit. This Prochlorococcus marinus (strain NATL1A) protein is Small ribosomal subunit biogenesis GTPase RsgA.